Here is a 248-residue protein sequence, read N- to C-terminus: PF03932 family protein CutC (248 aa).

It belongs to the CutC family. As to quaternary structure, homodimer.

Its subcellular location is the cytoplasm. The polypeptide is PF03932 family protein CutC (Salmonella schwarzengrund (strain CVM19633)).